Here is a 181-residue protein sequence, read N- to C-terminus: Ribulose bisphosphate carboxylase small subunit, chloroplastic 1 (181 aa).

A chloroplast-targeting transit peptide spans 1–57 (MASSIVSSAAAATRSNVAQASMVAPFTGLKSAASFPVTKKNNNVDITSLASNGGRVR).

Belongs to the RuBisCO small chain family. In terms of assembly, (Microbial infection) Binds to tobamovirus movement protein; this interaction seems required for viral systemic movement. As to quaternary structure, heterohexadecamer of 8 large and 8 small subunits.

The protein resides in the plastid. It is found in the chloroplast. The protein localises to the cell junction. Its subcellular location is the plasmodesma. Functionally, ruBisCO catalyzes two reactions: the carboxylation of D-ribulose 1,5-bisphosphate, the primary event in carbon dioxide fixation, as well as the oxidative fragmentation of the pentose substrate. Both reactions occur simultaneously and in competition at the same active site. Although the small subunit is not catalytic it is essential for maximal activity. Involved in antiviral defenses. This chain is Ribulose bisphosphate carboxylase small subunit, chloroplastic 1, found in Solanum lycopersicum (Tomato).